Reading from the N-terminus, the 385-residue chain is UPF0284 protein P9215_05181 (385 aa).

Belongs to the UPF0284 family.

The protein is UPF0284 protein P9215_05181 of Prochlorococcus marinus (strain MIT 9215).